Reading from the N-terminus, the 108-residue chain is Nitrogenase-stabilizing/protective protein NifW (108 aa).

The protein belongs to the NifW family. As to quaternary structure, homotrimer; associates with NifD.

In terms of biological role, may protect the nitrogenase Fe-Mo protein from oxidative damage. This chain is Nitrogenase-stabilizing/protective protein NifW, found in Zymomonas mobilis subsp. mobilis (strain ATCC 31821 / ZM4 / CP4).